A 340-amino-acid chain; its full sequence is Ferrochelatase (340 aa).

Fe cation is bound by residues histidine 189 and glutamate 292.

The protein belongs to the ferrochelatase family.

It is found in the cytoplasm. The enzyme catalyses heme b + 2 H(+) = protoporphyrin IX + Fe(2+). It functions in the pathway porphyrin-containing compound metabolism; protoheme biosynthesis; protoheme from protoporphyrin-IX: step 1/1. Catalyzes the ferrous insertion into protoporphyrin IX. The polypeptide is Ferrochelatase (Pseudomonas fluorescens biotype C).